The chain runs to 258 residues: 5'-nucleotidase SurE (258 aa).

The a divalent metal cation site is built by aspartate 8, aspartate 9, serine 40, and asparagine 98.

The protein belongs to the SurE nucleotidase family. A divalent metal cation is required as a cofactor.

It localises to the cytoplasm. It catalyses the reaction a ribonucleoside 5'-phosphate + H2O = a ribonucleoside + phosphate. Nucleotidase that shows phosphatase activity on nucleoside 5'-monophosphates. This Synechococcus elongatus (strain ATCC 33912 / PCC 7942 / FACHB-805) (Anacystis nidulans R2) protein is 5'-nucleotidase SurE.